The chain runs to 184 residues: Ribosome maturation factor RimP (184 aa).

It belongs to the RimP family.

It is found in the cytoplasm. Required for maturation of 30S ribosomal subunits. The sequence is that of Ribosome maturation factor RimP from Corynebacterium diphtheriae (strain ATCC 700971 / NCTC 13129 / Biotype gravis).